Reading from the N-terminus, the 154-residue chain is Large ribosomal subunit protein uL30 (154 aa).

It belongs to the universal ribosomal protein uL30 family. As to quaternary structure, part of the 50S ribosomal subunit.

The chain is Large ribosomal subunit protein uL30 from Methanococcus maripaludis (strain DSM 14266 / JCM 13030 / NBRC 101832 / S2 / LL).